The chain runs to 194 residues: dCTP deaminase (194 aa).

Residues 110 to 115, D128, 136 to 138, Y171, K178, and Q182 each bind dCTP; these read RSSLAR and VLE. The Proton donor/acceptor role is filled by E138.

It belongs to the dCTP deaminase family. Homotrimer.

The catalysed reaction is dCTP + H2O + H(+) = dUTP + NH4(+). It functions in the pathway pyrimidine metabolism; dUMP biosynthesis; dUMP from dCTP (dUTP route): step 1/2. Functionally, catalyzes the deamination of dCTP to dUTP. This chain is dCTP deaminase, found in Mannheimia succiniciproducens (strain KCTC 0769BP / MBEL55E).